A 1166-amino-acid polypeptide reads, in one-letter code: Reverse gyrase 2 (1166 aa).

The RG N-terminal-type zinc finger occupies 1–40 (MINVMYKNSCPNCGGDISGDRLLNGLPCEACLPYINGIDD). Residues Cys10, Cys13, Cys28, and Cys31 each coordinate Zn(2+). ATP-binding positions include Gln92 and 109–116 (APTGLGKT). A Helicase ATP-binding domain is found at 96-285 (LRRLASNQSF…ALRLLTGFEP (190 aa)). A DEAD box motif is present at residues 190–193 (DDAD). Positions 576-1166 (FNISTGLLIV…VNPLKSEQNV (591 aa)) are topoisomerase I. The region spanning 580 to 743 (TGLLIVESPT…NVYRVVYHEI (164 aa)) is the Toprim domain. Glu586 lines the Mg(2+) pocket. Residues 662-689 (IKKCLDCNKIFSSASDKCPYCGSANLQS) form an RG C-terminal-type zinc finger. The Zn(2+) site is built by Cys665, Cys668, Cys679, and Cys682. Asp712 is a Mg(2+) binding site. Positions 759–1157 (NTNLVMSQIV…EIFSEISTLV (399 aa)) constitute a Topo IA-type catalytic domain. The active-site O-(5'-phospho-DNA)-tyrosine intermediate is the Tyr903.

It in the N-terminal section; belongs to the DEAD box helicase family. DDVD subfamily. In the C-terminal section; belongs to the type IA topoisomerase family. Monomer. Zn(2+) serves as cofactor. The cofactor is Mg(2+).

The protein resides in the cytoplasm. The catalysed reaction is ATP + H2O = ADP + phosphate + H(+). With respect to regulation, at least one of the 2 proteins is inhibited by actinomycin D. Less sensitive to NaCl than TopR1, maximal positive supercoiling is observed with 100 mM NaCl; as NaCl rises higher than 400 mM supercoiling decreases. At 600 mM NaCl relaxes but does not introduce positive supercoils into negatively supercoiled substrate. Modifies the topological state of DNA by introducing positive supercoils in an ATP-dependent process. A highly processive enzyme, it introduces a large number of positive supercoils directly in a negatively supercoiled substrate. At 75 degrees Celsius introduces more than 23 positive supercoils into pTZ18R DNA (probably 2860 bp), more than TopR1; unlike TopR1 little to no relaxation of the negatively supercoiled substrate is seen in the presence of ATP, in the absence of ATP no activity is seen. At 45 degrees Celsius the enzyme is slower and in vitro individual steps can be detected. It cleaves transiently a single DNA strand and remains covalently bound to the 5' DNA end through a tyrosine residue. May be involved in DNA damage response. May be involved in rewinding the DNA strands in the regions of the chromosome that have opened up to allow transcription or replication. Functionally, there are 2 genes for this protein in the cell. During exponential growth this is the more highly expressed isoform (about 125 molecules per cell at 80 degrees Celsius, about 117 molecules at 88 degrees Celsius); this isoform is less active at higher temperature. Grows actively at both 80 and 88 degrees Celsius; survives a long exposure at 45 degrees Celsius without DNA replication or cell division occurring. Experiments using whole cell extracts do not distinguish which isoform is present, the results are probably a mixture of the two forms. This is Reverse gyrase 2 from Saccharolobus solfataricus (strain ATCC 35092 / DSM 1617 / JCM 11322 / P2) (Sulfolobus solfataricus).